The sequence spans 207 residues: Octanoyltransferase (207 aa).

Positions 27–203 constitute a BPL/LPL catalytic domain; that stretch reads ASTEDELWVV…HLETQFTPKA (177 aa). Substrate contacts are provided by residues 66–73, 133–135, and 146–148; these read RGGQITYH, SLG, and GLA. Cys164 (acyl-thioester intermediate) is an active-site residue.

Belongs to the LipB family.

Its subcellular location is the cytoplasm. It carries out the reaction octanoyl-[ACP] + L-lysyl-[protein] = N(6)-octanoyl-L-lysyl-[protein] + holo-[ACP] + H(+). The protein operates within protein modification; protein lipoylation via endogenous pathway; protein N(6)-(lipoyl)lysine from octanoyl-[acyl-carrier-protein]: step 1/2. Its function is as follows. Catalyzes the transfer of endogenously produced octanoic acid from octanoyl-acyl-carrier-protein onto the lipoyl domains of lipoate-dependent enzymes. Lipoyl-ACP can also act as a substrate although octanoyl-ACP is likely to be the physiological substrate. This Neisseria meningitidis serogroup C / serotype 2a (strain ATCC 700532 / DSM 15464 / FAM18) protein is Octanoyltransferase.